The chain runs to 87 residues: RNA-binding protein Hfq (87 aa).

In terms of domain architecture, Sm spans 9-68; sequence DPFLNALRRERIPVSIYLVNGIKLQGQIESFDQFVILLKNTVNQMVYKHAISTVVPARPV. The tract at residues 65-87 is disordered; the sequence is ARPVSHHSGDRPASDRPAEKSEE. Over residues 71–87 the composition is skewed to basic and acidic residues; it reads HSGDRPASDRPAEKSEE.

It belongs to the Hfq family.

RNA chaperone that binds small regulatory RNA (sRNAs) and mRNAs to facilitate mRNA translational regulation in response to envelope stress, environmental stress and changes in metabolite concentrations. Also binds with high specificity to tRNAs. Essential for virulence in the suckling mouse model of cholera pathogenesis. This Vibrio cholerae serotype O1 (strain ATCC 39315 / El Tor Inaba N16961) protein is RNA-binding protein Hfq.